The sequence spans 331 residues: MTIKVGINGFGRIGRIVFRAAQERSDIEIVAINDLLDAEYMAYMLKYDSTHGRFNGTVEVKDGHLIVNGKKIRVTAERDPANLKWNEAGVEVVAEATGLFLTDETARKHITAGAKKVVMTGPSKDSTPMFVRGANFDTYAGQDIVSNASCTTNCLAPLAKVVNDNFGIVEALMTTVHATTATQKTVDGPSHKDWRGGRGASQNIIPSSTGAAKAVGKVLPELNGKLTGMAFRVPTPNVSVVDLTVRLAKPATYEEIKKAMKAASEGAMKGVLGYTEDDVVSTDFNGETCTSVFDAKAGIALNDNFVKLVSWYDNETGYSHKVLDLIAHISK.

NAD(+)-binding positions include 12 to 13 (RI), D34, R78, and T120. Residues 149–151 (SCT), T180, 209–210 (TG), and R232 each bind D-glyceraldehyde 3-phosphate. The active-site Nucleophile is the C150. N314 serves as a coordination point for NAD(+).

This sequence belongs to the glyceraldehyde-3-phosphate dehydrogenase family. Homotetramer.

Its subcellular location is the cytoplasm. It catalyses the reaction D-glyceraldehyde 3-phosphate + phosphate + NAD(+) = (2R)-3-phospho-glyceroyl phosphate + NADH + H(+). It participates in carbohydrate degradation; glycolysis; pyruvate from D-glyceraldehyde 3-phosphate: step 1/5. Functionally, catalyzes the oxidative phosphorylation of glyceraldehyde 3-phosphate (G3P) to 1,3-bisphosphoglycerate (BPG) using the cofactor NAD. The first reaction step involves the formation of a hemiacetal intermediate between G3P and a cysteine residue, and this hemiacetal intermediate is then oxidized to a thioester, with concomitant reduction of NAD to NADH. The reduced NADH is then exchanged with the second NAD, and the thioester is attacked by a nucleophilic inorganic phosphate to produce BPG. This Shimwellia blattae (strain ATCC 29907 / DSM 4481 / JCM 1650 / NBRC 105725 / CDC 9005-74) (Escherichia blattae) protein is Glyceraldehyde-3-phosphate dehydrogenase (gapA).